The primary structure comprises 219 residues: N-(5'-phosphoribosyl)anthranilate isomerase (219 aa).

This sequence belongs to the TrpF family.

The enzyme catalyses N-(5-phospho-beta-D-ribosyl)anthranilate = 1-(2-carboxyphenylamino)-1-deoxy-D-ribulose 5-phosphate. It participates in amino-acid biosynthesis; L-tryptophan biosynthesis; L-tryptophan from chorismate: step 3/5. This is N-(5'-phosphoribosyl)anthranilate isomerase from Mesorhizobium japonicum (strain LMG 29417 / CECT 9101 / MAFF 303099) (Mesorhizobium loti (strain MAFF 303099)).